Reading from the N-terminus, the 110-residue chain is Lichenan-specific phosphotransferase enzyme IIA component (110 aa).

Positions 3-101 constitute a PTS EIIA type-3 domain; sequence EEMEQIIFQI…AAEIIELYEK (99 aa). His-77 (tele-phosphohistidine intermediate; by HPr) is an active-site residue.

The protein localises to the cytoplasm. Functionally, the phosphoenolpyruvate-dependent sugar phosphotransferase system (PTS), a major carbohydrate active -transport system, catalyzes the phosphorylation of incoming sugar substrates concomitant with their translocation across the cell membrane. This system is involved in lichenan transport. This chain is Lichenan-specific phosphotransferase enzyme IIA component (licA), found in Bacillus subtilis (strain 168).